Here is a 452-residue protein sequence, read N- to C-terminus: GTPase Der (452 aa).

2 consecutive EngA-type G domains span residues Pro-4–Gln-169 and Ile-177–Arg-352. Residues Gly-10–Ser-17, Asp-57–Leu-61, Asn-120–Glu-123, Gly-183–Ser-190, Asp-230–Ile-234, and Asn-295–Asp-298 contribute to the GTP site. The KH-like domain maps to Arg-353 to Val-439.

This sequence belongs to the TRAFAC class TrmE-Era-EngA-EngB-Septin-like GTPase superfamily. EngA (Der) GTPase family. Associates with the 50S ribosomal subunit.

In terms of biological role, GTPase that plays an essential role in the late steps of ribosome biogenesis. This Synechocystis sp. (strain ATCC 27184 / PCC 6803 / Kazusa) protein is GTPase Der.